A 442-amino-acid polypeptide reads, in one-letter code: Putative protein YjbI (442 aa).

The protein is Putative protein YjbI (yjbI) of Escherichia coli (strain K12).